The following is a 122-amino-acid chain: MARIAGVDLPREKRVEIGLTYIYGIGRVSADRILEAANVDPSTRVRDLTDDEVKRISAVIDETMTVEGDLRREIALNIKRLQEIGCYRGIRHRKGLPVRGQKTKTNARTRKGPKRTVANKKK.

Residues 95 to 122 (GLPVRGQKTKTNARTRKGPKRTVANKKK) are disordered.

This sequence belongs to the universal ribosomal protein uS13 family. Part of the 30S ribosomal subunit. Forms a loose heterodimer with protein S19. Forms two bridges to the 50S subunit in the 70S ribosome.

Located at the top of the head of the 30S subunit, it contacts several helices of the 16S rRNA. In the 70S ribosome it contacts the 23S rRNA (bridge B1a) and protein L5 of the 50S subunit (bridge B1b), connecting the 2 subunits; these bridges are implicated in subunit movement. Contacts the tRNAs in the A and P-sites. The sequence is that of Small ribosomal subunit protein uS13 from Agathobacter rectalis (strain ATCC 33656 / DSM 3377 / JCM 17463 / KCTC 5835 / VPI 0990) (Eubacterium rectale).